A 1233-amino-acid polypeptide reads, in one-letter code: Hemocyanin A-type, units Ode to Odg (1233 aa).

The segment at 1-4 is ODD; the sequence is EGNE. Residues 5–422 form an ODE region; that stretch reads YLVRKNVERL…KQDADIDIPL (418 aa). Position 45 (H45) interacts with Cu cation. C51 and C62 are joined by a disulfide. The segment at residues 63-65 is a cross-link (2'-(S-cysteinyl)-histidine (Cys-His)); that stretch reads CLH. Cu cation is bound by residues H65, H74, H186, H190, and H217. 2 cysteine pairs are disulfide-bonded: C176-C243 and C334-C340. Residue N392 is glycosylated (N-linked (GlcNAc...) asparagine). Positions 423-839 are ODF; sequence NHIRRNVESL…KEIEKEAVRG (417 aa). H463 contributes to the Cu cation binding site. C468 and C478 are oxidised to a cystine. A cross-link (2'-(S-cysteinyl)-histidine (Cys-His)) is located at residues 479 to 481; the sequence is CLH. Residues H481 and H490 each contribute to the Cu cation site. A glycan (N-linked (GlcNAc...) asparagine) is linked at N538. 2 cysteine pairs are disulfide-bonded: C589–C656 and C743–C748. Positions 599, 603, and 630 each coordinate Cu cation. The tract at residues 840–1233 is ODG; that stretch reads TIIRKNVNSL…VFLAPAKTTH (394 aa). H880 contributes to the Cu cation binding site. The cysteines at positions 886 and 896 are disulfide-linked. N890 carries N-linked (GlcNAc...) asparagine glycosylation. The 2'-(S-cysteinyl)-histidine (Cys-His) cross-link spans 897-899; sequence CQH. Cu cation contacts are provided by H899, H908, H1008, H1012, and H1039. 2 disulfide bridges follow: C998/C1065 and C1152/C1158.

This sequence belongs to the tyrosinase family. Hemocyanin subfamily. As to quaternary structure, decamers of large identical subunits (350 kDa), each containing 7 globular oxygen-binding domains: ODA, ODB, ODC, ODD, ODE, ODF, and ODG. Cu(2+) is required as a cofactor.

In terms of biological role, hemocyanins are copper-containing oxygen carriers occurring freely dissolved in the hemolymph of many mollusks and arthropods. This is Hemocyanin A-type, units Ode to Odg from Enteroctopus dofleini (North Pacific giant octopus).